The following is a 420-amino-acid chain: MDKLKIEASGALAGNVVISGAKNAALPILMAGVLAETDFNVSNVPNLRDVNTSCELLRCLGAEVTRSGTDKVCISTTNLNEFCAPYDLVKTMRASILILGPLLARYGTADVSLPGGCAIGARPVNLHLQGLEQMGAQIEVQEGYIKARVDGRLKGAHIFMDMISVGATENLLMAASLADGETIIENAAREPEVVDLANCLIAMGAKIEGAGTDTVRIQGVESLQGCDYRVMPDRIETGSFLVAAAVTRGKIRCTKADPKSLEAVLAKLEDAGANITTGDDWIELDMQGKRPKAVNIKTVAYPGFPTDMQAQFCVLNALAEGTATITETIFENRFMHVPELSRMGATMELEGNTCIIHGIERLNGAQVMATDLRASASLVIAGLVAEGTTIVDRIYHLDRGYEHIEDKFKGLGGHVERVKS.

22 to 23 (KN) serves as a coordination point for phosphoenolpyruvate. Arg-93 serves as a coordination point for UDP-N-acetyl-alpha-D-glucosamine. Cys-117 (proton donor) is an active-site residue. At Cys-117 the chain carries 2-(S-cysteinyl)pyruvic acid O-phosphothioketal. UDP-N-acetyl-alpha-D-glucosamine is bound by residues Asp-307 and Ile-329.

It belongs to the EPSP synthase family. MurA subfamily.

The protein localises to the cytoplasm. It catalyses the reaction phosphoenolpyruvate + UDP-N-acetyl-alpha-D-glucosamine = UDP-N-acetyl-3-O-(1-carboxyvinyl)-alpha-D-glucosamine + phosphate. It functions in the pathway cell wall biogenesis; peptidoglycan biosynthesis. In terms of biological role, cell wall formation. Adds enolpyruvyl to UDP-N-acetylglucosamine. The sequence is that of UDP-N-acetylglucosamine 1-carboxyvinyltransferase from Shewanella pealeana (strain ATCC 700345 / ANG-SQ1).